We begin with the raw amino-acid sequence, 615 residues long: Afadin- and alpha-actinin-binding protein (615 aa).

Coiled-coil stretches lie at residues K126–D227 and R266–S293. 4 positions are modified to phosphoserine: S290, S293, S313, and S319. The interval S293 to E316 is disordered. Residues I375–L461 adopt a coiled-coil conformation. S537, S541, and S543 each carry phosphoserine. A disordered region spans residues P567–P615. Over residues E568–D581 the composition is skewed to basic and acidic residues.

This sequence belongs to the ADIP family. Interacts with SSX2 and SSX3. Does not interact with SSX1 and SSX4. Interacts with afadin and alpha-actinin. Interacts with VAV2. Interacts with PCM1. Interacts with WRAP73. In terms of tissue distribution, widely expressed.

It is found in the cell junction. The protein localises to the adherens junction. Its subcellular location is the nucleus. The protein resides in the cytoplasm. It localises to the cytoskeleton. It is found in the microtubule organizing center. The protein localises to the centrosome. Its subcellular location is the centriolar satellite. The protein resides in the cilium basal body. Its function is as follows. Belongs to an adhesion system, which plays a role in the organization of homotypic, interneuronal and heterotypic cell-cell adherens junctions (AJs). May connect the nectin-afadin and E-cadherin-catenin system through alpha-actinin and may be involved in organization of the actin cytoskeleton at AJs through afadin and alpha-actinin. Acts as a centrosome maturation factor, probably by maintaining the integrity of the pericentriolar material and proper microtubule nucleation at mitotic spindle poles. The function seems to implicate at least in part WRAP73; the SSX2IP:WRAP73 complex is proposed to act as regulator of spindle anchoring at the mitotic centrosome. Involved in cell movement: localizes at the leading edge of moving cells in response to PDGF and is required for the formation of the leading edge and the promotion of cell movement, possibly via activation of Rac signaling. Involved in ciliogenesis. It is required for targeted recruitment of the BBSome, CEP290, RAB8, and SSTR3 to the cilia. This Mus musculus (Mouse) protein is Afadin- and alpha-actinin-binding protein (Ssx2ip).